A 91-amino-acid chain; its full sequence is Ragulator complex protein LAMTOR5 homolog (91 aa).

It belongs to the LAMTOR5 family. Part of the Ragulator complex.

Its subcellular location is the cytoplasm. The protein resides in the lysosome. Functionally, regulator of the TOR pathway, a signaling cascade that promotes cell growth in response to growth factors, energy levels, and amino acids. As part of the Ragulator complex, may activate the TOR signaling cascade in response to amino acids. The protein is Ragulator complex protein LAMTOR5 homolog of Nematostella vectensis (Starlet sea anemone).